The following is a 447-amino-acid chain: Bifunctional protein GlmU (447 aa).

The interval 1–225 (MLTVAILAAG…NGELQGINNR (225 aa)) is pyrophosphorylase. UDP-N-acetyl-alpha-D-glucosamine is bound by residues 7–10 (LAAG), K21, Q73, and 78–79 (GT). A Mg(2+)-binding site is contributed by D103. The UDP-N-acetyl-alpha-D-glucosamine site is built by G140, E154, N169, and N223. N223 lines the Mg(2+) pocket. The linker stretch occupies residues 226-246 (VQLSKCEETIQNLIKEKHMLG). The tract at residues 247–447 (GVTFINPASC…QVNIENWKKN (201 aa)) is N-acetyltransferase. Residues R328 and K346 each coordinate UDP-N-acetyl-alpha-D-glucosamine. The active-site Proton acceptor is the H358. 2 residues coordinate UDP-N-acetyl-alpha-D-glucosamine: Y361 and N372. A375, A418, and R435 together coordinate acetyl-CoA.

In the N-terminal section; belongs to the N-acetylglucosamine-1-phosphate uridyltransferase family. This sequence in the C-terminal section; belongs to the transferase hexapeptide repeat family. As to quaternary structure, homotrimer. Requires Mg(2+) as cofactor.

The protein localises to the cytoplasm. The catalysed reaction is alpha-D-glucosamine 1-phosphate + acetyl-CoA = N-acetyl-alpha-D-glucosamine 1-phosphate + CoA + H(+). The enzyme catalyses N-acetyl-alpha-D-glucosamine 1-phosphate + UTP + H(+) = UDP-N-acetyl-alpha-D-glucosamine + diphosphate. The protein operates within nucleotide-sugar biosynthesis; UDP-N-acetyl-alpha-D-glucosamine biosynthesis; N-acetyl-alpha-D-glucosamine 1-phosphate from alpha-D-glucosamine 6-phosphate (route II): step 2/2. Its pathway is nucleotide-sugar biosynthesis; UDP-N-acetyl-alpha-D-glucosamine biosynthesis; UDP-N-acetyl-alpha-D-glucosamine from N-acetyl-alpha-D-glucosamine 1-phosphate: step 1/1. It functions in the pathway bacterial outer membrane biogenesis; LPS lipid A biosynthesis. Catalyzes the last two sequential reactions in the de novo biosynthetic pathway for UDP-N-acetylglucosamine (UDP-GlcNAc). The C-terminal domain catalyzes the transfer of acetyl group from acetyl coenzyme A to glucosamine-1-phosphate (GlcN-1-P) to produce N-acetylglucosamine-1-phosphate (GlcNAc-1-P), which is converted into UDP-GlcNAc by the transfer of uridine 5-monophosphate (from uridine 5-triphosphate), a reaction catalyzed by the N-terminal domain. This is Bifunctional protein GlmU from Prochlorococcus marinus (strain MIT 9515).